A 419-amino-acid chain; its full sequence is RNA polymerase sigma factor sigD, chloroplastic (419 aa).

Residues 1–52 constitute a chloroplast transit peptide; the sequence is MATTIPTTATATMCPSPPVPTISPLLRTTHQCQPSPSLSSPFSIKLSTALVC. A Polymerase core binding motif is present at residues 207–220; that stretch reads DLIQEGSIGLLRGA. A DNA-binding region (H-T-H motif) is located at residues 377 to 396; it reads FEEIGKSLKLSRERVRQING.

This sequence belongs to the sigma-70 factor family. Mostly expressed in leaves, and to a lesser extent in roots. Present in seedlings.

It is found in the plastid. Its subcellular location is the chloroplast. Functionally, sigma factors are initiation factors that promote the attachment of plastid-encoded RNA polymerase (PEP) to specific initiation sites and are then released. Regulates transcription of the ndhF gene which codes for a subunit of the plastid NDH [NAD(P)H dehydrogenase] complex. This chain is RNA polymerase sigma factor sigD, chloroplastic (SIGD), found in Arabidopsis thaliana (Mouse-ear cress).